We begin with the raw amino-acid sequence, 488 residues long: E3 ubiquitin-protein ligase RNF8 (488 aa).

Positions 38-92 (VTIGRGLSVTYQLISKVCPLMISRSHCVLKQNPEGQWTIMDNKSLNGVWLNRERL) constitute an FHA domain. Residues 68–72 (QNPEG) form a required for interaction with PIWIL1 region. The disordered stretch occupies residues 141–164 (DQRMEKHKGSRTKRKFSSPGLENL). Over residues 145–156 (EKHKGSRTKRKF) the composition is skewed to basic residues. Phosphoserine is present on S157. Residues 406-444 (CIICSEYFIEAVTLNCAHSFCSFCINEWMKRKVECPICR) form an RING-type zinc finger.

It belongs to the RNF8 family. Homodimer. Forms a E2-E3 ubiquitin ligase complex composed of the RNF8 homodimer and a E2 heterodimer of UBE2N and UBE2V2. Interacts with class III E2s, including UBE2E1, UBE2E2, and UBE2E3 and with UBE2N. Interacts with RXRA. Interacts (via FHA domain) with ATM-phosphorylated MDC1. Interacts (via FHA domain) with 'Thr-4829' phosphorylated HERC2 (via C-terminus). Interacts with PIWIL1; leading to sequester RNF8 in the cytoplasm. Interacts with WRAP53/TCAB1. In terms of assembly, (Microbial infection) May interact with the L.monocytogenes protein actA; however, given these errors in the sequence (AJ242721), the relevance of the interaction with actA remains to be confirmed. Autoubiquitinated through 'Lys-48' and 'Lys-63' of ubiquitin. 'Lys-63' polyubiquitination is mediated by UBE2N. 'Lys-29'-type polyubiquitination is also observed, but it doesn't require its own functional RING-type zinc finger.

The protein localises to the nucleus. Its subcellular location is the cytoplasm. The protein resides in the midbody. It localises to the chromosome. It is found in the telomere. The catalysed reaction is S-ubiquitinyl-[E2 ubiquitin-conjugating enzyme]-L-cysteine + [acceptor protein]-L-lysine = [E2 ubiquitin-conjugating enzyme]-L-cysteine + N(6)-ubiquitinyl-[acceptor protein]-L-lysine.. It participates in protein modification; protein ubiquitination. Its function is as follows. E3 ubiquitin-protein ligase that plays a key role in DNA damage signaling via 2 distinct roles: by mediating the 'Lys-63'-linked ubiquitination of histones H2A and H2AX and promoting the recruitment of DNA repair proteins at double-strand breaks (DSBs) sites, and by catalyzing 'Lys-48'-linked ubiquitination to remove target proteins from DNA damage sites. Following DNA DSBs, it is recruited to the sites of damage by ATM-phosphorylated MDC1 and catalyzes the 'Lys-63'-linked ubiquitination of histones H2A and H2AX, thereby promoting the formation of TP53BP1 and BRCA1 ionizing radiation-induced foci (IRIF). Also controls the recruitment of UIMC1-BRCC3 (RAP80-BRCC36) and PAXIP1/PTIP to DNA damage sites. Promotes the recruitment of NBN to DNA damage sites by catalyzing 'Lys-6'-linked ubiquitination of NBN. Also recruited at DNA interstrand cross-links (ICLs) sites and catalyzes 'Lys-63'-linked ubiquitination of histones H2A and H2AX, leading to recruitment of FAAP20 and Fanconi anemia (FA) complex, followed by interstrand cross-link repair. H2A ubiquitination also mediates the ATM-dependent transcriptional silencing at regions flanking DSBs in cis, a mechanism to avoid collision between transcription and repair intermediates. Promotes the formation of 'Lys-63'-linked polyubiquitin chains via interactions with the specific ubiquitin-conjugating UBE2N/UBC13 and ubiquitinates non-histone substrates such as PCNA. Substrates that are polyubiquitinated at 'Lys-63' are usually not targeted for degradation. Also catalyzes the formation of 'Lys-48'-linked polyubiquitin chains via interaction with the ubiquitin-conjugating UBE2L6/UBCH8, leading to degradation of substrate proteins such as CHEK2, JMJD2A/KDM4A and KU80/XRCC5: it is still unclear how the preference toward 'Lys-48'- versus 'Lys-63'-linked ubiquitination is regulated but it could be due to RNF8 ability to interact with specific E2 specific ligases. For instance, interaction with phosphorylated HERC2 promotes the association between RNF8 and UBE2N/UBC13 and favors the specific formation of 'Lys-63'-linked ubiquitin chains. Promotes non-homologous end joining (NHEJ) by promoting the 'Lys-48'-linked ubiquitination and degradation the of KU80/XRCC5. Following DNA damage, mediates the ubiquitination and degradation of JMJD2A/KDM4A in collaboration with RNF168, leading to unmask H4K20me2 mark and promote the recruitment of TP53BP1 at DNA damage sites. Following DNA damage, mediates the ubiquitination and degradation of POLD4/p12, a subunit of DNA polymerase delta. In the absence of POLD4, DNA polymerase delta complex exhibits higher proofreading activity. In addition to its function in damage signaling, also plays a role in higher-order chromatin structure by mediating extensive chromatin decondensation. Involved in the activation of ATM by promoting histone H2B ubiquitination, which indirectly triggers histone H4 'Lys-16' acetylation (H4K16ac), establishing a chromatin environment that promotes efficient activation of ATM kinase. Required in the testis, where it plays a role in the replacement of histones during spermatogenesis. At uncapped telomeres, promotes the joining of deprotected chromosome ends by inducing H2A ubiquitination and TP53BP1 recruitment, suggesting that it may enhance cancer development by aggravating telomere-induced genome instability in case of telomeric crisis. Promotes the assembly of RAD51 at DNA DSBs in the absence of BRCA1 and TP53BP1 Also involved in class switch recombination in immune system, via its role in regulation of DSBs repair. May be required for proper exit from mitosis after spindle checkpoint activation and may regulate cytokinesis. May play a role in the regulation of RXRA-mediated transcriptional activity. Not involved in RXRA ubiquitination by UBE2E2. This chain is E3 ubiquitin-protein ligase RNF8, found in Mus musculus (Mouse).